A 133-amino-acid chain; its full sequence is Small ribosomal subunit protein uS8 (133 aa).

It belongs to the universal ribosomal protein uS8 family. As to quaternary structure, part of the 30S ribosomal subunit. Contacts proteins S5 and S12.

Its function is as follows. One of the primary rRNA binding proteins, it binds directly to 16S rRNA central domain where it helps coordinate assembly of the platform of the 30S subunit. This is Small ribosomal subunit protein uS8 from Synechococcus elongatus (strain ATCC 33912 / PCC 7942 / FACHB-805) (Anacystis nidulans R2).